The following is a 1056-amino-acid chain: ATP-dependent helicase wrn-1 (1056 aa).

The interval 1–102 (MISDDDDLPS…SSSDDSDQGD (102 aa)) is disordered. Repeat copies occupy residues 17-26 (NEELPETEPE) and 28-37 (NDELPETEPE). Positions 17 to 37 (NEELPETEPEDNDELPETEPE) are 2 X 10 AA repeats of N-[ED]-E-L-P-E-T-E-P-E. The span at 19–38 (ELPETEPEDNDELPETEPES) shows a compositional bias: acidic residues. A compositionally biased stretch (polar residues) spans 43–53 (PTVTSNKTENQ). The segment covering 54–63 (VADEDYDSFD) has biased composition (acidic residues). A Helicase ATP-binding domain is found at 236 to 406 (VRNVLGGKDQ…IANLRLRKPL (171 aa)). An ATP-binding site is contributed by 249–256 (MSTGYGKS). The short motif at 348-351 (DEAH) is the DEAH box element. In terms of domain architecture, Helicase C-terminal spans 427 to 583 (MAEDLGLFMK…NLTMMLRQLE (157 aa)). Residues Cys591, Cys614, Cys615, and Cys618 each contribute to the Zn(2+) site. The tract at residues 749 to 771 (KEKAAPSTVPGASRSQSTKSSTE) is disordered. The segment covering 761-771 (SRSQSTKSSTE) has biased composition (polar residues). The region spanning 806–886 (PEKIDQLRSR…VQFSKETGIA (81 aa)) is the HRDC domain. Residues 1018 to 1056 (QEKPDIQSMPSTSNPSTIKTVPSTPSSSLRAPPLKKFKL) form a disordered region. The span at 1025 to 1046 (SMPSTSNPSTIKTVPSTPSSSL) shows a compositional bias: polar residues.

Belongs to the helicase family. RecQ subfamily. Requires Zn(2+) as cofactor.

It localises to the nucleus. The catalysed reaction is Couples ATP hydrolysis with the unwinding of duplex DNA by translocating in the 3'-5' direction.. The enzyme catalyses ATP + H2O = ADP + phosphate + H(+). In terms of biological role, essential for the formation of DNA replication focal centers; stably associates with foci elements generating binding sites for RP-A. Exhibits a magnesium-dependent ATP-dependent 3'-5' DNA-helicase activity. May be involved in the control of genomic stability. The sequence is that of ATP-dependent helicase wrn-1 (wrn-1) from Caenorhabditis elegans.